The chain runs to 498 residues: Myotilin (498 aa).

3 disordered regions span residues 1–46 (MFNY…QPRQ), 64–151 (MSSS…HEIQ), and 202–241 (QDDSGAQDSQQHNSEHARLQVPTSQVRSRSTSRGDVNDQD). Omega-N-methylarginine is present on Arg-20. The span at 29 to 43 (SSFSSQTKQSSIIIQ) shows a compositional bias: low complexity. The segment covering 77-138 (AGSNPGQRVT…INAKPSQTAN (62 aa)) has biased composition (polar residues). Residues 79–150 (SNPGQRVTTT…PIPRTPDHEI (72 aa)) form a necessary for interaction with ACTN1 region. Over residues 202-212 (QDDSGAQDSQQ) the composition is skewed to low complexity. Residues 215 to 493 (SEHARLQVPT…QRLAAQSGLY (279 aa)) form a necessary for interaction with FLNC region. The tract at residues 215–498 (SEHARLQVPT…QSGLYESEEL (284 aa)) is necessary for interaction with ACTA1. Polar residues predominate over residues 222-235 (VPTSQVRSRSTSRG). 2 consecutive Ig-like C2-type domains span residues 250–335 (PRFI…ATFT) and 349–441 (PMFI…LDVT).

The protein belongs to the myotilin/palladin family. In terms of assembly, homodimer. Interacts with ACTA1, ACTN1, FLNA, FLNB, FLNC and MYOZ2. Interacts with the C-terminal region of MYOZ1. As to expression, expressed in skeletal muscle (at protein level). Expressed in skeletal muscle, heart, bone marrow and thyroid gland.

It localises to the cell membrane. The protein localises to the sarcolemma. Its subcellular location is the cytoplasm. It is found in the cytoskeleton. The protein resides in the myofibril. It localises to the sarcomere. The protein localises to the z line. Its function is as follows. Component of a complex of multiple actin cross-linking proteins. Involved in the control of myofibril assembly and stability at the Z lines in muscle cells. This chain is Myotilin (MYOT), found in Homo sapiens (Human).